Consider the following 574-residue polypeptide: DNA mismatch repair protein MutL (574 aa).

The protein belongs to the DNA mismatch repair MutL/HexB family.

This protein is involved in the repair of mismatches in DNA. It is required for dam-dependent methyl-directed DNA mismatch repair. May act as a 'molecular matchmaker', a protein that promotes the formation of a stable complex between two or more DNA-binding proteins in an ATP-dependent manner without itself being part of a final effector complex. The chain is DNA mismatch repair protein MutL from Coxiella burnetii (strain RSA 331 / Henzerling II).